Consider the following 497-residue polypeptide: Glucose-6-phosphate 1-dehydrogenase (497 aa).

Residues 15–22 (GASGDLSK), Arg-49, and Lys-153 each bind NADP(+). Residues Lys-153, 183-187 (HYLGK), Glu-221, and Asp-240 contribute to the D-glucose 6-phosphate site. The active-site Proton acceptor is the His-245. Arg-336 contacts NADP(+). D-glucose 6-phosphate is bound at residue Lys-339. Residues Lys-345, Arg-349, and Arg-371 each contribute to the NADP(+) site. Residue Gln-373 coordinates D-glucose 6-phosphate. Residues 379–381 (YLK), 399–401 (DLT), and Arg-466 contribute to the NADP(+) site.

It belongs to the glucose-6-phosphate dehydrogenase family.

The catalysed reaction is D-glucose 6-phosphate + NADP(+) = 6-phospho-D-glucono-1,5-lactone + NADPH + H(+). It participates in carbohydrate degradation; pentose phosphate pathway; D-ribulose 5-phosphate from D-glucose 6-phosphate (oxidative stage): step 1/3. Functionally, catalyzes the rate-limiting step of the oxidative pentose-phosphate pathway, which represents a route for the dissimilation of carbohydrates besides glycolysis. The main function of this enzyme is to provide reducing power (NADPH) and pentose phosphates for fatty acid and nucleic acid synthesis. This is Glucose-6-phosphate 1-dehydrogenase (ZWF) from Kluyveromyces lactis (strain ATCC 8585 / CBS 2359 / DSM 70799 / NBRC 1267 / NRRL Y-1140 / WM37) (Yeast).